The primary structure comprises 118 residues: UPF0295 protein BCG9842_B4782 (118 aa).

The next 2 helical transmembrane spans lie at 12-32 (IRTF…LGVF) and 43-63 (FMMV…WIGM).

Belongs to the UPF0295 family.

The protein resides in the cell membrane. The chain is UPF0295 protein BCG9842_B4782 from Bacillus cereus (strain G9842).